Consider the following 88-residue polypeptide: Exodeoxyribonuclease 7 small subunit (88 aa).

This sequence belongs to the XseB family. In terms of assembly, heterooligomer composed of large and small subunits.

The protein resides in the cytoplasm. The enzyme catalyses Exonucleolytic cleavage in either 5'- to 3'- or 3'- to 5'-direction to yield nucleoside 5'-phosphates.. Its function is as follows. Bidirectionally degrades single-stranded DNA into large acid-insoluble oligonucleotides, which are then degraded further into small acid-soluble oligonucleotides. In Bordetella bronchiseptica (strain ATCC BAA-588 / NCTC 13252 / RB50) (Alcaligenes bronchisepticus), this protein is Exodeoxyribonuclease 7 small subunit.